A 226-amino-acid polypeptide reads, in one-letter code: Neuron-specific vesicular protein calcyon (226 aa).

A disordered region spans residues 1 to 23 (MVKLGCSFSGKPGKETGDQDGAA). Topologically, residues 1-88 (MVKLGCSFSG…EEGRRLPTAR (88 aa)) are extracellular. The helical transmembrane segment at 89-109 (MIAFAMALLGCVLIMYKAIWY) threads the bilayer. Topologically, residues 110–226 (DQFTCPDGFL…AEDVPSQSPK (117 aa)) are cytoplasmic. The interval 189 to 226 (TAAAAAAAEGNEPSGKPLDMREKEDPQKAEDVPSQSPK) is disordered. Residues 206-219 (LDMREKEDPQKAED) are compositionally biased toward basic and acidic residues.

Belongs to the NSG family. Interacts with CLTA. Expressed exclusively in neurons (at protein level). In all age groups, expressed at significantly higher levels in the medial prefrontal and orbital frontal cortices of spontaneously hypertensive rats (SHR), a model of attention deficit-hyperactivity disorder, than Wistar Kyoto (WKY) animals. In the motor cortex, dorsal striatum and nucleus accumbens, expression is significantly elevated in SHR only in younger animals.

Its subcellular location is the cytoplasmic vesicle membrane. It is found in the cell membrane. In terms of biological role, interacts with clathrin light chain A and stimulates clathrin self-assembly and clathrin-mediated endocytosis. The polypeptide is Neuron-specific vesicular protein calcyon (Caly) (Rattus norvegicus (Rat)).